Consider the following 45-residue polypeptide: Large ribosomal subunit protein bL34 (45 aa).

The span at 1–10 (MTKRTLEGTN) shows a compositional bias: basic and acidic residues. The segment at 1-27 (MTKRTLEGTNRKRKRTSGFRARMRSAT) is disordered. Over residues 11–23 (RKRKRTSGFRARM) the composition is skewed to basic residues.

Belongs to the bacterial ribosomal protein bL34 family.

In Synechococcus elongatus (strain ATCC 33912 / PCC 7942 / FACHB-805) (Anacystis nidulans R2), this protein is Large ribosomal subunit protein bL34.